Consider the following 1923-residue polypeptide: GREB1-like protein (1923 aa).

The span at 87–96 shows a compositional bias: acidic residues; that stretch reads EDDEDDEEMS. Disordered regions lie at residues 87–111, 246–326, and 1101–1222; these read EDDE…KPAP, SCHS…GPPK, and RAAV…RGCR. Residues 252–262 show a composition bias toward low complexity; sequence PSSSVSSTVTP. Polar residues-rich tracts occupy residues 263–278, 296–307, and 1119–1161; these read ENGT…TQTD, TPAHTGNYSLSP, and PQSN…SPAT. The span at 1195 to 1206 shows a compositional bias: low complexity; the sequence is SSTTSKPSSSSS. A helical membrane pass occupies residues 1843–1862; that stretch reads GVFFSGLLLYLCDSFVGADL.

It belongs to the GREB1 family. Widely expressed, with prominent expression in the cochlea. Expressed at high levels in fetal kidney. In adult tissues, highest levels in vagina, cervix and epididymis.

It is found in the membrane. Plays a major role in early metanephros and genital development. The chain is GREB1-like protein (GREB1L) from Homo sapiens (Human).